The sequence spans 629 residues: tRNA uridine 5-carboxymethylaminomethyl modification enzyme MnmG (629 aa).

Residues 15–20 (GAGHAG), Val127, and Ser182 contribute to the FAD site. A disordered region spans residues 203-226 (TPPRVKSSTIDYSKTEEQPGDDHP). Residues 215 to 226 (SKTEEQPGDDHP) are compositionally biased toward basic and acidic residues. Residue 274–288 (GARYCPSIEDKIVRF) coordinates NAD(+). Position 371 (Gln371) interacts with FAD.

This sequence belongs to the MnmG family. In terms of assembly, homodimer. Heterotetramer of two MnmE and two MnmG subunits. FAD serves as cofactor.

Its subcellular location is the cytoplasm. Functionally, NAD-binding protein involved in the addition of a carboxymethylaminomethyl (cmnm) group at the wobble position (U34) of certain tRNAs, forming tRNA-cmnm(5)s(2)U34. The protein is tRNA uridine 5-carboxymethylaminomethyl modification enzyme MnmG of Listeria innocua serovar 6a (strain ATCC BAA-680 / CLIP 11262).